Reading from the N-terminus, the 1435-residue chain is Gag-Pol polyprotein (1435 aa).

Gly2 carries the N-myristoyl glycine; by host lipid modification. The tract at residues Val7–Leu31 is interaction with Gp41. The segment at Leu8–Arg43 is interaction with host CALM1. The interaction with host AP3D1 stretch occupies residues Glu12 to Ile19. Positions Asp14 to His33 are interaction with membrane phosphatidylinositol 4,5-bisphosphate and RNA. The Nuclear export signal motif lies at Trp16–Arg22. The Nuclear localization signal motif lies at Lys26–Lys32. The segment at Glu73–Ser77 is interaction with membrane phosphatidylinositol 4,5-bisphosphate. A disordered region spans residues Glu106 to Val128. Residue Tyr132 is modified to Phosphotyrosine; by host. Residues Asn189–Gln227 form an interaction with human PPIA/CYPA and NUP153 region. A dimerization/Multimerization of capsid protein p24 region spans residues Tyr277 to Leu363. CCHC-type zinc fingers lie at residues Val390–Ala407 and Lys411–Glu428. The interval Pro489–Leu493 is dimerization of protease. The Peptidase A2 domain occupies Lys508 to Leu577. Asp513 functions as the For protease activity; shared with dimeric partner in the catalytic mechanism. 2 dimerization of protease regions span residues Gly537–Lys543 and Asn576–Pro588. One can recognise a Reverse transcriptase domain in the interval Glu631–Leu821. Mg(2+)-binding residues include Asp697, Asp772, and Asp773. The segment at Phe814–His822 is RT 'primer grip'. The Tryptophan repeat motif motif lies at Trp985–Trp1001. Residues Ile1021–Arg1144 form the RNase H type-1 domain. 4 residues coordinate Mg(2+): Asp1030, Glu1065, Asp1085, and Asp1136. Residues Asp1150–Gln1191 form an Integrase-type zinc finger. Zn(2+) contacts are provided by His1159, His1163, Cys1187, and Cys1190. The Integrase catalytic domain occupies Val1201–Ile1351. 3 residues coordinate Mg(2+): Asp1211, Asp1263, and Glu1299. A DNA-binding region (integrase-type) is located at residues Phe1370 to Asp1417.

As to quaternary structure, homotrimer; further assembles as hexamers of trimers. Interacts with gp41 (via C-terminus). Interacts with host CALM1; this interaction induces a conformational change in the Matrix protein, triggering exposure of the myristate group. Interacts with host AP3D1; this interaction allows the polyprotein trafficking to multivesicular bodies during virus assembly. Part of the pre-integration complex (PIC) which is composed of viral genome, matrix protein, Vpr and integrase. Homodimer; the homodimer further multimerizes as homohexamers or homopentamers. Interacts with human PPIA/CYPA; This interaction stabilizes the capsid. Interacts with human NUP153. Interacts with host PDZD8; this interaction stabilizes the capsid. Interacts with monkey TRIM5; this interaction destabilizes the capsid. In terms of assembly, homodimer, whose active site consists of two apposed aspartic acid residues. As to quaternary structure, heterodimer of p66 RT and p51 RT (RT p66/p51). Heterodimerization of RT is essential for DNA polymerase activity. The overall folding of the subdomains is similar in p66 RT and p51 RT but the spatial arrangements of the subdomains are dramatically different. Homotetramer; may further associate as a homohexadecamer. Part of the pre-integration complex (PIC) which is composed of viral genome, matrix protein, Vpr and integrase. Interacts with human SMARCB1/INI1 and human PSIP1/LEDGF isoform 1. Interacts with human KPNA3; this interaction might play a role in nuclear import of the pre-integration complex. Interacts with human NUP153; this interaction might play a role in nuclear import of the pre-integration complex. Mg(2+) is required as a cofactor. Post-translationally, specific enzymatic cleavages by the viral protease yield mature proteins. The protease is released by autocatalytic cleavage. The polyprotein is cleaved during and after budding, this process is termed maturation. Proteolytic cleavage of p66 RT removes the RNase H domain to yield the p51 RT subunit. Nucleocapsid protein p7 might be further cleaved after virus entry. In terms of processing, tyrosine phosphorylated presumably in the virion by a host kinase. Phosphorylation is apparently not a major regulator of membrane association. Phosphorylated possibly by host MAPK1; this phosphorylation is necessary for Pin1-mediated virion uncoating. Post-translationally, methylated by host PRMT6, impairing its function by reducing RNA annealing and the initiation of reverse transcription.

It localises to the host cell membrane. It is found in the host endosome. The protein localises to the host multivesicular body. The protein resides in the virion membrane. Its subcellular location is the host nucleus. It localises to the host cytoplasm. It is found in the virion. The enzyme catalyses Specific for a P1 residue that is hydrophobic, and P1' variable, but often Pro.. It catalyses the reaction Endohydrolysis of RNA in RNA/DNA hybrids. Three different cleavage modes: 1. sequence-specific internal cleavage of RNA. Human immunodeficiency virus type 1 and Moloney murine leukemia virus enzymes prefer to cleave the RNA strand one nucleotide away from the RNA-DNA junction. 2. RNA 5'-end directed cleavage 13-19 nucleotides from the RNA end. 3. DNA 3'-end directed cleavage 15-20 nucleotides away from the primer terminus.. It carries out the reaction 3'-end directed exonucleolytic cleavage of viral RNA-DNA hybrid.. The catalysed reaction is DNA(n) + a 2'-deoxyribonucleoside 5'-triphosphate = DNA(n+1) + diphosphate. With respect to regulation, protease: The viral protease is inhibited by many synthetic protease inhibitors (PIs), such as amprenavir, atazanavir, indinavir, loprinavir, nelfinavir, ritonavir and saquinavir. Use of protease inhibitors in tritherapy regimens permit more ambitious therapeutic strategies. Reverse transcriptase/ribonuclease H: RT can be inhibited either by nucleoside RT inhibitors (NRTIs) or by non nucleoside RT inhibitors (NNRTIs). NRTIs act as chain terminators, whereas NNRTIs inhibit DNA polymerization by binding a small hydrophobic pocket near the RT active site and inducing an allosteric change in this region. Classical NRTIs are abacavir, adefovir (PMEA), didanosine (ddI), lamivudine (3TC), stavudine (d4T), tenofovir (PMPA), zalcitabine (ddC), and zidovudine (AZT). Classical NNRTIs are atevirdine (BHAP U-87201E), delavirdine, efavirenz (DMP-266), emivirine (I-EBU), and nevirapine (BI-RG-587). The tritherapies used as a basic effective treatment of AIDS associate two NRTIs and one NNRTI. In terms of biological role, mediates, with Gag polyprotein, the essential events in virion assembly, including binding the plasma membrane, making the protein-protein interactions necessary to create spherical particles, recruiting the viral Env proteins, and packaging the genomic RNA via direct interactions with the RNA packaging sequence (Psi). Gag-Pol polyprotein may regulate its own translation, by the binding genomic RNA in the 5'-UTR. At low concentration, the polyprotein would promote translation, whereas at high concentration, the polyprotein would encapsidate genomic RNA and then shut off translation. Targets the polyprotein to the plasma membrane via a multipartite membrane-binding signal, that includes its myristoylated N-terminus. Matrix protein is part of the pre-integration complex. Implicated in the release from host cell mediated by Vpu. Binds to RNA. Functionally, forms the conical core that encapsulates the genomic RNA-nucleocapsid complex in the virion. Most core are conical, with only 7% tubular. The core is constituted by capsid protein hexamer subunits. The core is disassembled soon after virion entry. Host restriction factors such as TRIM5-alpha or TRIMCyp bind retroviral capsids and cause premature capsid disassembly, leading to blocks in reverse transcription. Capsid restriction by TRIM5 is one of the factors which restricts HIV-1 to the human species. Host PIN1 apparently facilitates the virion uncoating. On the other hand, interactions with PDZD8 or CYPA stabilize the capsid. Its function is as follows. Encapsulates and protects viral dimeric unspliced genomic RNA (gRNA). Binds these RNAs through its zinc fingers. Acts as a nucleic acid chaperone which is involved in rearangement of nucleic acid secondary structure during gRNA retrotranscription. Also facilitates template switch leading to recombination. As part of the polyprotein, participates in gRNA dimerization, packaging, tRNA incorporation and virion assembly. In terms of biological role, aspartyl protease that mediates proteolytic cleavages of Gag and Gag-Pol polyproteins during or shortly after the release of the virion from the plasma membrane. Cleavages take place as an ordered, step-wise cascade to yield mature proteins. This process is called maturation. Displays maximal activity during the budding process just prior to particle release from the cell. Also cleaves Nef and Vif, probably concomitantly with viral structural proteins on maturation of virus particles. Hydrolyzes host EIF4GI and PABP1 in order to shut off the capped cellular mRNA translation. The resulting inhibition of cellular protein synthesis serves to ensure maximal viral gene expression and to evade host immune response. Also mediates cleavage of host YTHDF3. Mediates cleavage of host CARD8, thereby activating the CARD8 inflammasome, leading to the clearance of latent HIV-1 in patient CD4(+) T-cells after viral reactivation; in contrast, HIV-1 can evade CARD8-sensing when its protease remains inactive in infected cells prior to viral budding. Multifunctional enzyme that converts the viral RNA genome into dsDNA in the cytoplasm, shortly after virus entry into the cell. This enzyme displays a DNA polymerase activity that can copy either DNA or RNA templates, and a ribonuclease H (RNase H) activity that cleaves the RNA strand of RNA-DNA heteroduplexes in a partially processive 3' to 5' endonucleasic mode. Conversion of viral genomic RNA into dsDNA requires many steps. A tRNA(3)-Lys binds to the primer-binding site (PBS) situated at the 5'-end of the viral RNA. RT uses the 3' end of the tRNA primer to perform a short round of RNA-dependent minus-strand DNA synthesis. The reading proceeds through the U5 region and ends after the repeated (R) region which is present at both ends of viral RNA. The portion of the RNA-DNA heteroduplex is digested by the RNase H, resulting in a ssDNA product attached to the tRNA primer. This ssDNA/tRNA hybridizes with the identical R region situated at the 3' end of viral RNA. This template exchange, known as minus-strand DNA strong stop transfer, can be either intra- or intermolecular. RT uses the 3' end of this newly synthesized short ssDNA to perform the RNA-dependent minus-strand DNA synthesis of the whole template. RNase H digests the RNA template except for two polypurine tracts (PPTs) situated at the 5'-end and near the center of the genome. It is not clear if both polymerase and RNase H activities are simultaneous. RNase H probably can proceed both in a polymerase-dependent (RNA cut into small fragments by the same RT performing DNA synthesis) and a polymerase-independent mode (cleavage of remaining RNA fragments by free RTs). Secondly, RT performs DNA-directed plus-strand DNA synthesis using the PPTs that have not been removed by RNase H as primers. PPTs and tRNA primers are then removed by RNase H. The 3' and 5' ssDNA PBS regions hybridize to form a circular dsDNA intermediate. Strand displacement synthesis by RT to the PBS and PPT ends produces a blunt ended, linear dsDNA copy of the viral genome that includes long terminal repeats (LTRs) at both ends. Functionally, catalyzes viral DNA integration into the host chromosome, by performing a series of DNA cutting and joining reactions. This enzyme activity takes place after virion entry into a cell and reverse transcription of the RNA genome in dsDNA. The first step in the integration process is 3' processing. This step requires a complex comprising the viral genome, matrix protein, Vpr and integrase. This complex is called the pre-integration complex (PIC). The integrase protein removes 2 nucleotides from each 3' end of the viral DNA, leaving recessed CA OH's at the 3' ends. In the second step, the PIC enters cell nucleus. This process is mediated through integrase and Vpr proteins, and allows the virus to infect a non dividing cell. This ability to enter the nucleus is specific of lentiviruses, other retroviruses cannot and rely on cell division to access cell chromosomes. In the third step, termed strand transfer, the integrase protein joins the previously processed 3' ends to the 5' ends of strands of target cellular DNA at the site of integration. The 5'-ends are produced by integrase-catalyzed staggered cuts, 5 bp apart. A Y-shaped, gapped, recombination intermediate results, with the 5'-ends of the viral DNA strands and the 3' ends of target DNA strands remaining unjoined, flanking a gap of 5 bp. The last step is viral DNA integration into host chromosome. This involves host DNA repair synthesis in which the 5 bp gaps between the unjoined strands are filled in and then ligated. Since this process occurs at both cuts flanking the HIV genome, a 5 bp duplication of host DNA is produced at the ends of HIV-1 integration. Alternatively, Integrase may catalyze the excision of viral DNA just after strand transfer, this is termed disintegration. This Homo sapiens (Human) protein is Gag-Pol polyprotein (gag-pol).